The sequence spans 162 residues: D-aminoacyl-tRNA deacylase (162 aa).

A Gly-cisPro motif, important for rejection of L-amino acids motif is present at residues 143-144 (GP).

It belongs to the DTD family. In terms of assembly, homodimer.

The protein resides in the cytoplasm. The catalysed reaction is glycyl-tRNA(Ala) + H2O = tRNA(Ala) + glycine + H(+). It catalyses the reaction a D-aminoacyl-tRNA + H2O = a tRNA + a D-alpha-amino acid + H(+). Its function is as follows. An aminoacyl-tRNA editing enzyme that deacylates mischarged D-aminoacyl-tRNAs. Also deacylates mischarged glycyl-tRNA(Ala), protecting cells against glycine mischarging by AlaRS. Acts via tRNA-based rather than protein-based catalysis; rejects L-amino acids rather than detecting D-amino acids in the active site. By recycling D-aminoacyl-tRNA to D-amino acids and free tRNA molecules, this enzyme counteracts the toxicity associated with the formation of D-aminoacyl-tRNA entities in vivo and helps enforce protein L-homochirality. This chain is D-aminoacyl-tRNA deacylase, found in Nitratidesulfovibrio vulgaris (strain ATCC 29579 / DSM 644 / CCUG 34227 / NCIMB 8303 / VKM B-1760 / Hildenborough) (Desulfovibrio vulgaris).